The sequence spans 192 residues: Thiol-disulfide oxidoreductase ResA (192 aa).

The helical; Signal-anchor for type II membrane protein transmembrane segment at S22–K41 threads the bilayer. In terms of domain architecture, Thioredoxin spans Y47 to P189. A disulfide bond links C89 and C92.

This sequence belongs to the thioredoxin family. ResA subfamily.

The protein localises to the cell membrane. The protein operates within protein modification; cytochrome c assembly. In terms of biological role, thiol-disulfide oxidoreductase which is required in disulfide reduction during c-type cytochrome synthesis. May accept reducing equivalents from CcdA, leading to breakage of disulfide bonds in apocytochrome c; following this reduction heme can be covalently attached. The sequence is that of Thiol-disulfide oxidoreductase ResA from Oceanobacillus iheyensis (strain DSM 14371 / CIP 107618 / JCM 11309 / KCTC 3954 / HTE831).